A 238-amino-acid chain; its full sequence is Ribonuclease PH (238 aa).

Phosphate-binding positions include arginine 86 and glycine 124–arginine 126.

This sequence belongs to the RNase PH family. As to quaternary structure, homohexameric ring arranged as a trimer of dimers.

It carries out the reaction tRNA(n+1) + phosphate = tRNA(n) + a ribonucleoside 5'-diphosphate. Phosphorolytic 3'-5' exoribonuclease that plays an important role in tRNA 3'-end maturation. Removes nucleotide residues following the 3'-CCA terminus of tRNAs; can also add nucleotides to the ends of RNA molecules by using nucleoside diphosphates as substrates, but this may not be physiologically important. Probably plays a role in initiation of 16S rRNA degradation (leading to ribosome degradation) during starvation. This is Ribonuclease PH from Shigella boydii serotype 18 (strain CDC 3083-94 / BS512).